A 612-amino-acid chain; its full sequence is MPQYRSKTSTHGRNMAGARALWRATGVKDDDFGKPIIAIANSFTQFVPGHVHLKDMGQLVAGAVEAAGGIAKEFNTIAIDDGIAMGHSGMLYSLPSRDLIADSIEYMVNAHCADAIVCISNCDKITPGMLMAALRLNIPVIFVSGGPMEAGKTKLSDQIIKLDLVDAMVMGPDKNVSDEDLAKVERSACPTCGSCSGMFTANSMNCLTEALGLSLPGNGSMLATHADREQLFLEAGERIVDITKRHYEQDDYSVLPRAIACREAFENAMALDIAMGGSTNTILHLLACAQEAELDYTVADMDEMSRRIPQLCKVAPSTPLYHMEDVHRAGGVMAILGELDRAGLLNSDIPTILSPTMKEQLAKYDIMQTDDPKIIDFYRAGPAGIRTVKPFSQSCRWDTVDNDRAAGCVRSLEHAFSTEGGLAVLFGNMAVDGAVVKTAGVDNDNLTFTGPAKIYESQDTAVAAILGGKVVEGDVVVIRYEGPQGGPGMQEMLYPTSYLKSMGLGKKCALVTDGRFSGGTSGLSIGHASPEAAAGGVIGLIEDGDIIDINIPTRTMDLKVSDEILAERRIAMDIHGWKPVSRERHVSTALKVYALMATSADKGAIRDISKLK.

Position 81 (aspartate 81) interacts with Mg(2+). Cysteine 122 contributes to the [2Fe-2S] cluster binding site. The Mg(2+) site is built by aspartate 123 and lysine 124. N6-carboxylysine is present on lysine 124. Cysteine 195 lines the [2Fe-2S] cluster pocket. Glutamate 491 contributes to the Mg(2+) binding site. Serine 517 acts as the Proton acceptor in catalysis.

This sequence belongs to the IlvD/Edd family. As to quaternary structure, homodimer. Requires [2Fe-2S] cluster as cofactor. The cofactor is Mg(2+).

It catalyses the reaction (2R)-2,3-dihydroxy-3-methylbutanoate = 3-methyl-2-oxobutanoate + H2O. The enzyme catalyses (2R,3R)-2,3-dihydroxy-3-methylpentanoate = (S)-3-methyl-2-oxopentanoate + H2O. The protein operates within amino-acid biosynthesis; L-isoleucine biosynthesis; L-isoleucine from 2-oxobutanoate: step 3/4. It participates in amino-acid biosynthesis; L-valine biosynthesis; L-valine from pyruvate: step 3/4. Functionally, functions in the biosynthesis of branched-chain amino acids. Catalyzes the dehydration of (2R,3R)-2,3-dihydroxy-3-methylpentanoate (2,3-dihydroxy-3-methylvalerate) into 2-oxo-3-methylpentanoate (2-oxo-3-methylvalerate) and of (2R)-2,3-dihydroxy-3-methylbutanoate (2,3-dihydroxyisovalerate) into 2-oxo-3-methylbutanoate (2-oxoisovalerate), the penultimate precursor to L-isoleucine and L-valine, respectively. This is Dihydroxy-acid dehydratase from Psychromonas ingrahamii (strain DSM 17664 / CCUG 51855 / 37).